Consider the following 449-residue polypeptide: UDP-N-acetylmuramoylalanine--D-glutamate ligase (449 aa).

117–123 provides a ligand contact to ATP; it reads GSNGKTT.

It belongs to the MurCDEF family.

The protein resides in the cytoplasm. It catalyses the reaction UDP-N-acetyl-alpha-D-muramoyl-L-alanine + D-glutamate + ATP = UDP-N-acetyl-alpha-D-muramoyl-L-alanyl-D-glutamate + ADP + phosphate + H(+). It participates in cell wall biogenesis; peptidoglycan biosynthesis. In terms of biological role, cell wall formation. Catalyzes the addition of glutamate to the nucleotide precursor UDP-N-acetylmuramoyl-L-alanine (UMA). This chain is UDP-N-acetylmuramoylalanine--D-glutamate ligase, found in Exiguobacterium sibiricum (strain DSM 17290 / CCUG 55495 / CIP 109462 / JCM 13490 / 255-15).